The chain runs to 242 residues: Type III pantothenate kinase (242 aa).

Residue Asp-6–Lys-13 coordinates ATP. Residues Tyr-86 and Gly-93 to Arg-96 each bind substrate. Asp-95 functions as the Proton acceptor in the catalytic mechanism. Asp-116 provides a ligand contact to K(+). Thr-119 serves as a coordination point for ATP. A substrate-binding site is contributed by Thr-171.

It belongs to the type III pantothenate kinase family. Homodimer. It depends on NH4(+) as a cofactor. The cofactor is K(+).

It localises to the cytoplasm. It carries out the reaction (R)-pantothenate + ATP = (R)-4'-phosphopantothenate + ADP + H(+). The protein operates within cofactor biosynthesis; coenzyme A biosynthesis; CoA from (R)-pantothenate: step 1/5. Its function is as follows. Catalyzes the phosphorylation of pantothenate (Pan), the first step in CoA biosynthesis. The protein is Type III pantothenate kinase of Phocaeicola vulgatus (strain ATCC 8482 / DSM 1447 / JCM 5826 / CCUG 4940 / NBRC 14291 / NCTC 11154) (Bacteroides vulgatus).